A 130-amino-acid polypeptide reads, in one-letter code: Small ribosomal subunit protein uS11 (130 aa).

The protein belongs to the universal ribosomal protein uS11 family. In terms of assembly, part of the 30S ribosomal subunit. Interacts with proteins S7 and S18. Binds to IF-3.

Located on the platform of the 30S subunit, it bridges several disparate RNA helices of the 16S rRNA. Forms part of the Shine-Dalgarno cleft in the 70S ribosome. This chain is Small ribosomal subunit protein uS11, found in Syntrophus aciditrophicus (strain SB).